Consider the following 628-residue polypeptide: Chaperone protein HtpG (628 aa).

Residues 1 to 340 (MSTETLQKET…SADLPLNVSR (340 aa)) are a; substrate-binding. Residues 341-557 (EILQHSKDIE…EHDLSGNLER (217 aa)) are b. Residues 558-628 (LLKAAGQKTP…FVRRVNAMLA (71 aa)) form a c region.

It belongs to the heat shock protein 90 family. As to quaternary structure, homodimer.

The protein resides in the cytoplasm. Its function is as follows. Molecular chaperone. Has ATPase activity. The chain is Chaperone protein HtpG from Methylobacillus flagellatus (strain ATCC 51484 / DSM 6875 / VKM B-1610 / KT).